The chain runs to 92 residues: Small ribosomal subunit protein uS19 (92 aa).

It belongs to the universal ribosomal protein uS19 family.

In terms of biological role, protein S19 forms a complex with S13 that binds strongly to the 16S ribosomal RNA. The protein is Small ribosomal subunit protein uS19 of Pectobacterium atrosepticum (strain SCRI 1043 / ATCC BAA-672) (Erwinia carotovora subsp. atroseptica).